We begin with the raw amino-acid sequence, 134 residues long: Postmeiotic segregation increased 2-like protein 5 (134 aa).

The protein belongs to the DNA mismatch repair MutL/HexB family.

The sequence is that of Postmeiotic segregation increased 2-like protein 5 (PMS2P5) from Homo sapiens (Human).